Here is a 316-residue protein sequence, read N- to C-terminus: Probable cell division protein WhiA (316 aa).

Residues T275–A309 constitute a DNA-binding region (H-T-H motif).

It belongs to the WhiA family.

Functionally, involved in cell division and chromosome segregation. This Bacillus cereus (strain G9842) protein is Probable cell division protein WhiA.